Consider the following 467-residue polypeptide: Light-independent protochlorophyllide reductase subunit N (467 aa).

Residues Cys-22, Cys-47, and Cys-107 each coordinate [4Fe-4S] cluster.

The protein belongs to the BchN/ChlN family. Protochlorophyllide reductase is composed of three subunits; ChlL, ChlN and ChlB. Forms a heterotetramer of two ChlB and two ChlN subunits. It depends on [4Fe-4S] cluster as a cofactor.

Its subcellular location is the plastid. The protein localises to the chloroplast. The catalysed reaction is chlorophyllide a + oxidized 2[4Fe-4S]-[ferredoxin] + 2 ADP + 2 phosphate = protochlorophyllide a + reduced 2[4Fe-4S]-[ferredoxin] + 2 ATP + 2 H2O. The protein operates within porphyrin-containing compound metabolism; chlorophyll biosynthesis (light-independent). In terms of biological role, component of the dark-operative protochlorophyllide reductase (DPOR) that uses Mg-ATP and reduced ferredoxin to reduce ring D of protochlorophyllide (Pchlide) to form chlorophyllide a (Chlide). This reaction is light-independent. The NB-protein (ChlN-ChlB) is the catalytic component of the complex. This is Light-independent protochlorophyllide reductase subunit N from Pinus thunbergii (Japanese black pine).